Reading from the N-terminus, the 178-residue chain is Transcription termination/antitermination protein NusG (178 aa).

In terms of domain architecture, KOW spans 130-159 (SVKVKEGPFANFIGTIEEIQLDKRKLKVHV).

It belongs to the NusG family.

Functionally, participates in transcription elongation, termination and antitermination. The sequence is that of Transcription termination/antitermination protein NusG from Halalkalibacterium halodurans (strain ATCC BAA-125 / DSM 18197 / FERM 7344 / JCM 9153 / C-125) (Bacillus halodurans).